The following is a 73-amino-acid chain: Alternative prion protein (73 aa).

Residues 32-52 (WWWLGAASWWWLGAAPWWWLG) form a helical membrane-spanning segment.

Detected in brain homogenate, primary neurons, and peripheral blood mononuclear cells (at protein level).

Its subcellular location is the mitochondrion outer membrane. This is Alternative prion protein (PRNP) from Homo sapiens (Human).